A 327-amino-acid chain; its full sequence is Thioredoxin reductase (327 aa).

FAD is bound by residues 10–13 (SGPA), 39–40 (IA), Gln44, Asn53, Val86, Cys143, Asp286, and 293–295 (RQA). Residues Cys140 and Cys143 are joined by a disulfide bond.

This sequence belongs to the class-II pyridine nucleotide-disulfide oxidoreductase family. As to quaternary structure, homodimer. It depends on FAD as a cofactor.

It is found in the cytoplasm. The enzyme catalyses [thioredoxin]-dithiol + NADP(+) = [thioredoxin]-disulfide + NADPH + H(+). Its function is as follows. Component of the thioredoxin-thioredoxin reductase system which may be involved in biosynthesis of penicillins and cephalosporins and may be important in determining the thiol-disulfide redox balance. The protein is Thioredoxin reductase (TRR1) of Pneumocystis jirovecii (Human pneumocystis pneumonia agent).